A 261-amino-acid chain; its full sequence is NAD(P)H-quinone oxidoreductase subunit K, chloroplastic (261 aa).

[4Fe-4S] cluster contacts are provided by cysteine 64, cysteine 65, cysteine 129, and cysteine 160.

This sequence belongs to the complex I 20 kDa subunit family. As to quaternary structure, NDH is composed of at least 16 different subunits, 5 of which are encoded in the nucleus. [4Fe-4S] cluster serves as cofactor.

It is found in the plastid. Its subcellular location is the chloroplast thylakoid membrane. The catalysed reaction is a plastoquinone + NADH + (n+1) H(+)(in) = a plastoquinol + NAD(+) + n H(+)(out). It catalyses the reaction a plastoquinone + NADPH + (n+1) H(+)(in) = a plastoquinol + NADP(+) + n H(+)(out). Functionally, NDH shuttles electrons from NAD(P)H:plastoquinone, via FMN and iron-sulfur (Fe-S) centers, to quinones in the photosynthetic chain and possibly in a chloroplast respiratory chain. The immediate electron acceptor for the enzyme in this species is believed to be plastoquinone. Couples the redox reaction to proton translocation, and thus conserves the redox energy in a proton gradient. The sequence is that of NAD(P)H-quinone oxidoreductase subunit K, chloroplastic from Physcomitrium patens (Spreading-leaved earth moss).